The sequence spans 129 residues: Small ribosomal subunit protein uS9 (129 aa).

The disordered stretch occupies residues 107 to 129 (SRVVERKKPGKKKARRSPQFSKR). Residues 114 to 129 (KPGKKKARRSPQFSKR) show a composition bias toward basic residues.

This sequence belongs to the universal ribosomal protein uS9 family.

In Sulfurovum sp. (strain NBC37-1), this protein is Small ribosomal subunit protein uS9.